A 173-amino-acid chain; its full sequence is Transcriptional regulator ERG homolog (173 aa).

Positions 1–84 form a DNA-binding region, ETS; it reads SGQIQLWQFL…HGKRYAYKFD (84 aa).

The protein belongs to the ETS family.

Its subcellular location is the nucleus. Its function is as follows. Acts as a transcriptional activator. This chain is Transcriptional regulator ERG homolog (ERG), found in Lytechinus variegatus (Green sea urchin).